The sequence spans 523 residues: 2-isopropylmalate synthase (523 aa).

The region spanning 5–267 (VIIFDTTLRD…HTNINHHEIW (263 aa)) is the Pyruvate carboxyltransferase domain. Aspartate 14, histidine 202, histidine 204, and asparagine 238 together coordinate Mn(2+). The segment at 392-523 (RLDYFSVQSG…HNKENNKEIV (132 aa)) is regulatory domain.

The protein belongs to the alpha-IPM synthase/homocitrate synthase family. LeuA type 1 subfamily. As to quaternary structure, homodimer. It depends on Mn(2+) as a cofactor.

The protein resides in the cytoplasm. It catalyses the reaction 3-methyl-2-oxobutanoate + acetyl-CoA + H2O = (2S)-2-isopropylmalate + CoA + H(+). Its pathway is amino-acid biosynthesis; L-leucine biosynthesis; L-leucine from 3-methyl-2-oxobutanoate: step 1/4. Functionally, catalyzes the condensation of the acetyl group of acetyl-CoA with 3-methyl-2-oxobutanoate (2-ketoisovalerate) to form 3-carboxy-3-hydroxy-4-methylpentanoate (2-isopropylmalate). This Salmonella arizonae (strain ATCC BAA-731 / CDC346-86 / RSK2980) protein is 2-isopropylmalate synthase.